The sequence spans 379 residues: Cathepsin B-like protease 1 (379 aa).

A signal peptide spans 1–30 (MADSCCIRLHLLASVFLLLFSSFNLQGIAA). A propeptide spans 31 to 102 (ENLSKQKLTS…PIVRHDLSLK (72 aa)) (activation peptide). N32 and N69 each carry an N-linked (GlcNAc...) asparagine glycan. Intrachain disulfides connect C116–C165, C148–C191, C182–C236, C183–C187, C213–C240, and C222–C227. Residue C151 is part of the active site. N-linked (GlcNAc...) asparagine glycosylation is present at N171. Active-site residues include H306 and N327. An N-linked (GlcNAc...) asparagine glycan is attached at N330. The propeptide at 363–379 (NVFKGITTSDDLLVSSV) is removed in mature form.

It belongs to the peptidase C1 family.

Functionally, thiol protease that plays a central role in plant programmed cell death (PCD). In addition to its role in protein degradation, may cleave and/or degrade a number of target proteins, activating signaling towards PCD. Contributes to the increase of caspase-3-like activity after UV-C-induced PCD and is required for abiotic stress-induced PCD. Functions redundantly with CATHB2 and CATHB3 in basal defense and distinct forms of plant programmed cell death (PCD). Participates in the establishment of basal resistance against the bacterial pathogen Pseudomonase syringae pv. tomato DC3000. Required for full levels of PCD during resistance (R) gene-mediated hypersensitive response (HR). Involved in the regulation of senescence, a developmental form of PCD in plants. This is Cathepsin B-like protease 1 from Arabidopsis thaliana (Mouse-ear cress).